A 106-amino-acid chain; its full sequence is Thioredoxin (106 aa).

In terms of domain architecture, Thioredoxin spans 2–106 (VQVISNLDEF…LESLVQKSLA (105 aa)). Residues C30 and C33 each act as nucleophile in the active site. C30 and C33 form a disulfide bridge.

It belongs to the thioredoxin family.

Participates in various redox reactions through the reversible oxidation of its active center dithiol to a disulfide and catalyzes dithiol-disulfide exchange reactions. This Coprinus comatus (Shaggy mane) protein is Thioredoxin.